The chain runs to 949 residues: Zinc finger CCHC domain-containing protein 14 (949 aa).

Disordered stretches follow at residues 25-44 (SSLN…PGGA), 59-92 (EAPV…LGKH), 200-221 (STSS…LSKV), 236-262 (AGIP…LPHC), 355-457 (KEKS…DKEK), and 739-779 (PESS…PQPA). The span at 28–43 (NGGGGHGGKGAPGPGG) shows a compositional bias: gly residues. Polar residues predominate over residues 61-78 (PVSSVSNSLENALHTSAH). Positions 200–219 (STSSPPQQLQSPSPGNPSLS) are enriched in low complexity. The span at 395–411 (HAAELRVEVEQPHHQLP) shows a compositional bias: basic and acidic residues. The span at 416-425 (SSEYSSSSSS) shows a compositional bias: low complexity. Basic and acidic residues predominate over residues 431–457 (AREESSDSAEENDRRVEIHLESSDKEK). A CCHC-type zinc finger spans residues 906 to 923 (LSCYNCGATGHRAQDCKQ).

The polypeptide is Zinc finger CCHC domain-containing protein 14 (ZCCHC14) (Homo sapiens (Human)).